Consider the following 708-residue polypeptide: ATP-dependent RNA helicase laf-1 (708 aa).

Residues 1–21 show a composition bias toward low complexity; it reads MESNQSNNGGSGNAALNRGGR. A disordered region spans residues 1–191; sequence MESNQSNNGG…RGTSKWENRG (191 aa). Over residues 48–70 the composition is skewed to gly residues; that stretch reads GAGGGGYRRGGGNSGGGGGGGYD. Basic and acidic residues-rich tracts occupy residues 72–83 and 90–99; these read GYNDNRDDRDNR and GRDRNYEDRG. Gly residues predominate over residues 100 to 123; that stretch reads YNGGGGGGGNRGYNNNRGGGGGGY. The Q motif signature appears at 231-259; sequence SLFSDLSLHEWIEENIKTAGYDRPTPVQK. Residues 262–453 enclose the Helicase ATP-binding domain; the sequence is IPALQGGRDL…QDFLKENYVF (192 aa). An ATP-binding site is contributed by 275–282; sequence AQTGSGKT. The short motif at 397–400 is the DEAD box element; the sequence is DEAD. Positions 465–626 constitute a Helicase C-terminal domain; sequence NIMQKIVWVE…ELPDWLEGMS (162 aa). A disordered region spans residues 623 to 708; the sequence is EGMSGDMRSG…RAQPQQDWWS (86 aa). 2 stretches are compositionally biased toward gly residues: residues 630–647 and 656–692; these read RSGG…GQRF and GGSG…GGGR. Residues 699 to 708 show a composition bias toward polar residues; that stretch reads RAQPQQDWWS.

This sequence belongs to the DEAD box helicase family. DDX3/DED1 subfamily. In terms of assembly, binds RNA as a monomer at low laf-1 concentrations and as a dimer at high laf-1 concentrations. Expressed in the germline and soma of young adult hermaphrodites.

Its subcellular location is the cytoplasm. The protein resides in the cytoplasmic granule. It is found in the nucleus. It localises to the stress granule. The protein localises to the inflammasome. Its subcellular location is the cell membrane. The protein resides in the cell projection. It is found in the lamellipodium. The catalysed reaction is ATP + H2O = ADP + phosphate + H(+). Its function is as follows. Multifunctional ATP-dependent RNA helicase. Plays a role in RNA remodeling, but is not required for RNA unwinding. Binds to RNA in a concentration-dependent manner to stimulate annealing between two complementary strands of RNA. This process is also dependent upon ATP; ATP reduces binding to RNA and subsequently diminishes RNA annealing. Involved in many cellular processes, which do not necessarily require its ATPase/helicase catalytic activities. Involved in the regulation of transcription and translation initiation. Involved in innate immunity. Involved in both stress and inflammatory responses. Promotes liquid-liquid phase separation of P granules, which is a process important for intracellular organization and stress granule assembly. Required for embryonic development. Plays a role in sexual cell fate determination by negatively regulating the translation of the sex determining protein tra-2. May play a protective role in the response to heat and oxidative stress. May negatively regulate extrinsic apoptotic signaling pathway via death domain receptors. May be involved in mitotic chromosome segregation. The protein is ATP-dependent RNA helicase laf-1 of Caenorhabditis elegans.